The primary structure comprises 138 residues: Large ribosomal subunit protein uL16 (138 aa).

Residues 1–13 are compositionally biased toward basic residues; it reads MLQPSRRKYRKEQ. A disordered region spans residues 1-20; that stretch reads MLQPSRRKYRKEQKGRNTGL.

It belongs to the universal ribosomal protein uL16 family. In terms of assembly, part of the 50S ribosomal subunit.

Its function is as follows. Binds 23S rRNA and is also seen to make contacts with the A and possibly P site tRNAs. The polypeptide is Large ribosomal subunit protein uL16 (Bordetella avium (strain 197N)).